We begin with the raw amino-acid sequence, 155 residues long: 3-hydroxyacyl-[acyl-carrier-protein] dehydratase FabZ (155 aa).

His54 is a catalytic residue.

It belongs to the thioester dehydratase family. FabZ subfamily.

The protein localises to the cytoplasm. The enzyme catalyses a (3R)-hydroxyacyl-[ACP] = a (2E)-enoyl-[ACP] + H2O. In terms of biological role, involved in unsaturated fatty acids biosynthesis. Catalyzes the dehydration of short chain beta-hydroxyacyl-ACPs and long chain saturated and unsaturated beta-hydroxyacyl-ACPs. In Burkholderia lata (strain ATCC 17760 / DSM 23089 / LMG 22485 / NCIMB 9086 / R18194 / 383), this protein is 3-hydroxyacyl-[acyl-carrier-protein] dehydratase FabZ.